The chain runs to 186 residues: Large ribosomal subunit protein uL10 (186 aa).

It belongs to the universal ribosomal protein uL10 family. Part of the ribosomal stalk of the 50S ribosomal subunit. The N-terminus interacts with L11 and the large rRNA to form the base of the stalk. The C-terminus forms an elongated spine to which L12 dimers bind in a sequential fashion forming a multimeric L10(L12)X complex.

Functionally, forms part of the ribosomal stalk, playing a central role in the interaction of the ribosome with GTP-bound translation factors. This chain is Large ribosomal subunit protein uL10, found in Nitrosococcus oceani (strain ATCC 19707 / BCRC 17464 / JCM 30415 / NCIMB 11848 / C-107).